Consider the following 180-residue polypeptide: NADH-quinone oxidoreductase subunit I (180 aa).

2 4Fe-4S ferredoxin-type domains span residues 48-80 (IVLT…LQKS) and 90-119 (EFFR…LTPD). [4Fe-4S] cluster-binding residues include cysteine 60, cysteine 63, cysteine 66, cysteine 70, cysteine 99, cysteine 102, cysteine 105, and cysteine 109. A compositionally biased stretch (basic and acidic residues) spans 161-174 (KPKGDAENEAKPID). The disordered stretch occupies residues 161-180 (KPKGDAENEAKPIDVKSLLP).

The protein belongs to the complex I 23 kDa subunit family. As to quaternary structure, NDH-1 is composed of 13 different subunits. Subunits NuoA, H, J, K, L, M, N constitute the membrane sector of the complex. [4Fe-4S] cluster serves as cofactor.

The protein resides in the cell inner membrane. The catalysed reaction is a quinone + NADH + 5 H(+)(in) = a quinol + NAD(+) + 4 H(+)(out). Its function is as follows. NDH-1 shuttles electrons from NADH, via FMN and iron-sulfur (Fe-S) centers, to quinones in the respiratory chain. The immediate electron acceptor for the enzyme in this species is believed to be ubiquinone. Couples the redox reaction to proton translocation (for every two electrons transferred, four hydrogen ions are translocated across the cytoplasmic membrane), and thus conserves the redox energy in a proton gradient. The chain is NADH-quinone oxidoreductase subunit I from Shewanella oneidensis (strain ATCC 700550 / JCM 31522 / CIP 106686 / LMG 19005 / NCIMB 14063 / MR-1).